Here is an 830-residue protein sequence, read N- to C-terminus: Probable glucan 1,3-beta-glucosidase D (830 aa).

Basic and acidic residues-rich tracts occupy residues 1–11 (MPGHSRSRDRL) and 74–84 (VHEHDHDHEYD). Disordered regions lie at residues 1–91 (MPGH…EEPW), 127–163 (MSGA…QRRK), and 260–297 (GGPG…STSA). The Cytoplasmic portion of the chain corresponds to 1–307 (MPGHSRSRDR…RPSFWKRYHK (307 aa)). The segment covering 147–163 (GKGKKRLDRETRRQRRK) has biased composition (basic residues). A helical; Signal-anchor for type II membrane protein transmembrane segment spans residues 308–328 (TFIFFAILIVLAAIAIPVGII). Over 329 to 830 (EARRLHGTSG…PSFGNLPEYY (502 aa)) the chain is Extracellular. 7 N-linked (GlcNAc...) asparagine glycosylation sites follow: Asn-341, Asn-376, Asn-381, Asn-393, Asn-397, Asn-546, and Asn-558. The active-site Proton donor is the Glu-597. Asn-610, Asn-669, and Asn-689 each carry an N-linked (GlcNAc...) asparagine glycan. The Nucleophile role is filled by Glu-702.

Belongs to the glycosyl hydrolase 5 (cellulase A) family.

It localises to the cell membrane. The catalysed reaction is Successive hydrolysis of beta-D-glucose units from the non-reducing ends of (1-&gt;3)-beta-D-glucans, releasing alpha-glucose.. Its function is as follows. Glucosidase involved in the degradation of cellulosic biomass. Active on lichenan. The sequence is that of Probable glucan 1,3-beta-glucosidase D (exgD) from Aspergillus niger (strain ATCC MYA-4892 / CBS 513.88 / FGSC A1513).